The chain runs to 120 residues: C-C motif chemokine 23 (120 aa).

A signal peptide spans 1–21; the sequence is MKVSVAALSCLMLVTALGSQA. Cystine bridges form between C54–C78, C55–C94, and C65–C105.

Belongs to the intercrine beta (chemokine CC) family. The N-terminal is proteolytically cleaved by proteases associated with inflammatory responses. The processed forms, CCL23(19-99), CCL23(22-99), CCL23(27-99) and CCL23(30-99) exhibit increase in CCR1-mediated signaling and chemotaxis assays in vitro. In terms of tissue distribution, high levels in adult lung, liver, skeletal muscle and pancreas. Moderate levels in fetal liver, adult bone marrow and placenta. The short form is the major species and the longer form was detected only in very low abundance. CCL23(19-99), CCL23(22-99), CCL23(27-99), CCL23(30-99) are found in high levels in synovial fluids from rheumatoid patients.

It localises to the secreted. Its function is as follows. Shows chemotactic activity for monocytes, resting T-lymphocytes, and neutrophils, but not for activated lymphocytes. Inhibits proliferation of myeloid progenitor cells in colony formation assays. This protein can bind heparin. Binds CCR1. CCL23(19-99), CCL23(22-99), CCL23(27-99), CCL23(30-99) are more potent chemoattractants than CCL23. The polypeptide is C-C motif chemokine 23 (CCL23) (Homo sapiens (Human)).